A 112-amino-acid chain; its full sequence is Cytochrome c 2.1 (112 aa).

The heme c site is built by Cys-20, Cys-23, His-24, and Met-85.

It belongs to the cytochrome c family. Binds 1 heme c group covalently per subunit.

Its subcellular location is the mitochondrion intermembrane space. In terms of biological role, electron carrier protein. The oxidized form of the cytochrome c heme group can accept an electron from the heme group of the cytochrome c1 subunit of cytochrome reductase. Cytochrome c then transfers this electron to the cytochrome oxidase complex, the final protein carrier in the mitochondrial electron-transport chain. The polypeptide is Cytochrome c 2.1 (Caenorhabditis briggsae).